We begin with the raw amino-acid sequence, 114 residues long: Vacuolar ATPase assembly integral membrane protein VMA21 (114 aa).

The Cytoplasmic portion of the chain corresponds to 1 to 39 (MATRRIISQEKTLLEKDDSIGSSPAADEKSNIAPAVPTS). Residues 40–60 (VIMKLLAFTLGMIVIPIGSYF) traverse the membrane as a helical segment. Over 61–73 (ATVDSVFNGNSTY) the chain is Lumenal. Residues 74–94 (AGALAAIMANVVLIGYIFVAM) form a helical membrane-spanning segment. The Cytoplasmic portion of the chain corresponds to 95–114 (AEDQSDQQEGGGPGDGKKDR). Residues 111-114 (KKDR) carry the Prevents secretion from ER motif.

It belongs to the VMA21 family.

The protein localises to the endoplasmic reticulum membrane. The protein resides in the endoplasmic reticulum-Golgi intermediate compartment membrane. Its subcellular location is the cytoplasmic vesicle. It is found in the COPII-coated vesicle membrane. Required for the assembly of the V0 complex of the vacuolar ATPase (V-ATPase) in the endoplasmic reticulum. The polypeptide is Vacuolar ATPase assembly integral membrane protein VMA21 (Chaetomium globosum (strain ATCC 6205 / CBS 148.51 / DSM 1962 / NBRC 6347 / NRRL 1970) (Soil fungus)).